The sequence spans 47 residues: Packaging protein P22 (47 aa).

The chain crosses the membrane as a helical span at residues 22 to 42 (TGWLAFVGLIIVAIILWQQII).

As to quaternary structure, heterodimer of P20 and P22; further multimerizes as hexamers of heterodimers. Part of the dodecameric portal complex that is composed of the packaging efficiency factor P6, the DNA packaging ATPase P9, and the internal heterododecamer P20/P22 which spans the virion inner membrane.

It localises to the virion membrane. Together with P22, forms the internal part of the portal complex embeded in the virion internal membrane and which plays critical roles in genome packaging and genome ejection. Both proteins multimerize as a single ring-shaped heterdodecamer arranged around a central channel and interact with the P6/P9 external part of the portal. This Enterobacteria phage PRD1 (Bacteriophage PRD1) protein is Packaging protein P22 (XXII).